Reading from the N-terminus, the 118-residue chain is Autophagy-related protein 8 (118 aa).

The Phosphatidylethanolamine amidated glycine moiety is linked to residue Gly-116. Residues 117–118 (SI) constitute a propeptide, removed in mature form.

This sequence belongs to the ATG8 family. In terms of assembly, conjugation to phosphatidylethanolamine (PE) leads to homodimerization. Interacts with ATG1, ATG3, ATG4, ATG7 and ATG12. In terms of processing, the C-terminal Ser-117 and Ile-118 residues of ATG8 are removed by ATG4 to expose Gly-116 at the C-terminus. This Gly-116 forms then a thioester bond with ATG7 (E1-like activating enzyme) before being transferred to ATG3 (the specific E2 conjugating enzyme), in order to be finally amidated with phosphatidylethanolamine. This lipid modification anchors ATG8 to membranes and can be reversed by ATG4, releasing soluble ATG8.

It localises to the cytoplasmic vesicle. The protein localises to the cvt vesicle membrane. Its subcellular location is the autophagosome membrane. The protein resides in the vacuole membrane. In terms of biological role, ubiquitin-like modifier involved in cytoplasm to vacuole transport (Cvt) vesicles and autophagosome formation. With ATG4, mediates the delivery of the vesicles and autophagosomes to the vacuole via the microtubule cytoskeleton. Required for selective autophagic degradation of the nucleus (nucleophagy) as well as for mitophagy which contributes to regulate mitochondrial quantity and quality by eliminating the mitochondria to a basal level to fulfill cellular energy requirements and preventing excess ROS production. Also participates in membrane fusion events that take place in the early secretory pathway. Also involved in endoplasmic reticulum-specific autophagic process and is essential for the survival of cells subjected to severe ER stress. The ATG8-PE conjugate mediates tethering between adjacent membranes and stimulates membrane hemifusion, leading to expansion of the autophagosomal membrane during autophagy. Moreover not only conjugation, but also subsequent ATG8-PE deconjugation is an important step required to facilitate multiple events during macroautophagy, and especially for efficient autophagosome biogenesis, the assembly of ATG9-containing tubulovesicular clusters into phagophores/autophagosomes, and for the disassembly of PAS-associated ATG components. Contributes to conidiation by regulating the conidial levels of the conidiation-related protein CP15 and mediates fungal oxidation resistance by controlling total superoxide dismutase (SOD) activity. The protein is Autophagy-related protein 8 of Beauveria bassiana (strain ARSEF 2860) (White muscardine disease fungus).